The following is a 1457-amino-acid chain: ABC transporter G family member 36 (1457 aa).

Residues 14-43 (RLGGSMRGDSGSMWRRGDDVFSRSSREEDD) are disordered. Over residues 28-39 (RRGDDVFSRSSR) the composition is skewed to basic and acidic residues. An ABC transporter 1 domain is found at 164-437 (GNALGILPNR…FESMGFKCPD (274 aa)). Position 197–204 (197–204 (GPPGSGKT)) interacts with ATP. Positions 515–728 (ELLKANIDRE…AQNAISVNEL (214 aa)) constitute an ABC transmembrane type-2 1 domain. 7 helical membrane-spanning segments follow: residues 533 to 553 (FVYMFRTFQLMVVSLIAMTLF), 565 to 585 (SGGIYMGALFFGVLMIMFNGF), 621 to 641 (IPITFIEVGGYVFLTYYVIGF), 653 to 673 (LLMLAINQMAGSLFRFIGGAA), 677 to 697 (IVANVFASFMLLIFMVLGGFI), 706 to 726 (WWIWGYWISPMMYAQNAISVN), and 765 to 785 (IGFGAMIGFTILFNALFTLAL). Residues 821-841 (SSGSTRRPMGNGTENDSTIVD) are disordered. Residues 860–1112 (LSFDNVRYSV…ELIKYFESIP (253 aa)) form the ABC transporter 2 domain. 905–912 (GVSGAGKT) is an ATP binding site. Residues 1185–1399 (TQCMACLWKQ…TLYGLVVSQF (215 aa)) enclose the ABC transmembrane type-2 2 domain. A run of 7 helical transmembrane segments spans residues 1209–1229 (FFFTTVIALLFGTIFWDLGGK), 1244–1264 (YAAVLFIGVMNCTSVQPVVAV), 1292–1312 (IPYTLVQATVYGIIVYAMIGF), 1319–1339 (FFWYLFFMVFTLLYFTFYGMM), 1349–1369 (IASIVSSAFYAIWNLFSGFVI), 1380–1400 (WYCWACPVAWTLYGLVVSQFG), and 1429–1449 (WVATVVAAFAFLFASLFGFAI).

The protein belongs to the ABC transporter superfamily. ABCG family. PDR (TC 3.A.1.205) subfamily.

It is found in the membrane. In terms of biological role, may be a general defense protein. The protein is ABC transporter G family member 36 of Oryza sativa subsp. japonica (Rice).